The chain runs to 142 residues: Large ribosomal subunit protein uL13 (142 aa).

The protein belongs to the universal ribosomal protein uL13 family. Part of the 50S ribosomal subunit.

Its function is as follows. This protein is one of the early assembly proteins of the 50S ribosomal subunit, although it is not seen to bind rRNA by itself. It is important during the early stages of 50S assembly. The polypeptide is Large ribosomal subunit protein uL13 (Haemophilus influenzae (strain PittGG)).